Here is a 285-residue protein sequence, read N- to C-terminus: MANIRIIKRRIRSVRNIAKITRAMEMIAASKMKKAQERGLAGRPYSEKITEVIAALAALPQSGEILHPLLERRPVKKIAVLHITPDRGQCGGLVANINRKTGTFMLEQKIPVSAVVVGRKGVDFIRRIKQQMRAEFINLGDRPGYLDTLPISRVIMDDFMSGEIDQVFIAYTQFVTTAVQKPVLEQLLPVVPLELPPGQNLEYIYEPESATVLNSLLPRFVEMSVYHAILESIASEQSARMVAMRNATDNAKELIGELTLVYNKARQESITNELLDIVGGAAALA.

This sequence belongs to the ATPase gamma chain family. F-type ATPases have 2 components, CF(1) - the catalytic core - and CF(0) - the membrane proton channel. CF(1) has five subunits: alpha(3), beta(3), gamma(1), delta(1), epsilon(1). CF(0) has three main subunits: a, b and c.

The protein resides in the cell membrane. Its function is as follows. Produces ATP from ADP in the presence of a proton gradient across the membrane. The gamma chain is believed to be important in regulating ATPase activity and the flow of protons through the CF(0) complex. The protein is ATP synthase gamma chain of Dehalococcoides mccartyi (strain ATCC BAA-2266 / KCTC 15142 / 195) (Dehalococcoides ethenogenes (strain 195)).